A 538-amino-acid polypeptide reads, in one-letter code: Ubiquitin domain-containing protein DSK2a (538 aa).

One can recognise a Ubiquitin-like domain in the interval 18-93 (VAVNVRCSNG…VHMVRGFVPS (76 aa)). Residues 95 to 120 (PSAPAANAGNQTTAPQAVGSNDSSNL) form a disordered region. Positions 102–119 (AGNQTTAPQAVGSNDSSN) are enriched in polar residues. 2 STI1 domains span residues 138–179 (GNAM…QNLM) and 192–231 (NPQM…MREM). A disordered region spans residues 289–316 (QGVTTQGSDTSNNISAPNAETGTPNANP). STI1 domains lie at 357–394 (SPLG…MNQL) and 398–433 (NPQL…MQQM). The region spanning 491–535 (PPEERFATQLQQLQEMGFYDRAENIRALLATNGNVNAAVERLLGS) is the UBA domain.

As to quaternary structure, interacts with 'Lys-48'-linked polyubiquitin chains via its UBA domain. Interacts with RPN10 and RPN13. Interacts with PEX2 and PEX12. As to expression, ubiquitous with a strong expression level in inflorescence.

Its subcellular location is the nucleus. It is found in the cytoplasm. Functionally, binds and presumably selects ubiquitin-conjugates for destruction. Prefers multiubiquitin chains rather than single ubiquitins, with a binding affinity for 'Lys-48'-linked ubiquitin chains. Acts as a ubiquitin receptor that associates with the 26S proteasomal docking subunit RPN10 for the indirect recognition of ubiquitinated substrates of ubiquitin/26S proteasome-mediated proteolysis (UPP). In Arabidopsis thaliana (Mouse-ear cress), this protein is Ubiquitin domain-containing protein DSK2a (DSK2A).